Consider the following 543-residue polypeptide: Chaperonin GroEL 1 (543 aa).

ATP-binding positions include 29-32 (TLGP), 86-90 (DGTTT), glycine 413, 479-481 (NAA), and aspartate 495.

Belongs to the chaperonin (HSP60) family. Forms a cylinder of 14 subunits composed of two heptameric rings stacked back-to-back. Interacts with the co-chaperonin GroES.

Its subcellular location is the cytoplasm. The enzyme catalyses ATP + H2O + a folded polypeptide = ADP + phosphate + an unfolded polypeptide.. Functionally, together with its co-chaperonin GroES, plays an essential role in assisting protein folding. The GroEL-GroES system forms a nano-cage that allows encapsulation of the non-native substrate proteins and provides a physical environment optimized to promote and accelerate protein folding. The protein is Chaperonin GroEL 1 of Prochlorococcus marinus (strain NATL2A).